Reading from the N-terminus, the 105-residue chain is Pyrimidine/purine nucleoside phosphorylase (105 aa).

The protein belongs to the nucleoside phosphorylase PpnP family.

It catalyses the reaction a purine D-ribonucleoside + phosphate = a purine nucleobase + alpha-D-ribose 1-phosphate. The catalysed reaction is adenosine + phosphate = alpha-D-ribose 1-phosphate + adenine. The enzyme catalyses cytidine + phosphate = cytosine + alpha-D-ribose 1-phosphate. It carries out the reaction guanosine + phosphate = alpha-D-ribose 1-phosphate + guanine. It catalyses the reaction inosine + phosphate = alpha-D-ribose 1-phosphate + hypoxanthine. The catalysed reaction is thymidine + phosphate = 2-deoxy-alpha-D-ribose 1-phosphate + thymine. The enzyme catalyses uridine + phosphate = alpha-D-ribose 1-phosphate + uracil. It carries out the reaction xanthosine + phosphate = alpha-D-ribose 1-phosphate + xanthine. Catalyzes the phosphorolysis of diverse nucleosides, yielding D-ribose 1-phosphate and the respective free bases. Can use uridine, adenosine, guanosine, cytidine, thymidine, inosine and xanthosine as substrates. Also catalyzes the reverse reactions. In Wolinella succinogenes (strain ATCC 29543 / DSM 1740 / CCUG 13145 / JCM 31913 / LMG 7466 / NCTC 11488 / FDC 602W) (Vibrio succinogenes), this protein is Pyrimidine/purine nucleoside phosphorylase.